Consider the following 2092-residue polypeptide: RNA-directed RNA polymerase L (2092 aa).

Residues 18–215 are endonuclease; sequence VPIKHFDCTM…ELSSTDEELG (198 aa). Residues H79, D111, and E125 each contribute to the Mn(2+) site. Residue K143 is the For endonuclease activity of the active site. Positions 975–1166 constitute a RdRp catalytic domain; the sequence is ARKQCKGPVW…AICFRMKKEL (192 aa). D1134 is a Mg(2+) binding site. Positions 1706-1822 are cap-binding; it reads GAGTVGGFIK…PFGCPVYIIK (117 aa).

It belongs to the Bunyavirales RNA polymerase family. As to quaternary structure, homomultimer. Interacts with glycoprotein N; this interaction allows efficient polymerase packaging into virus particles. Interacts with nucleoprotein N. The cofactor is Mn(2+). Requires Mg(2+) as cofactor.

It localises to the host Golgi apparatus. It is found in the host endoplasmic reticulum. The protein resides in the host endoplasmic reticulum-Golgi intermediate compartment. The protein localises to the virion. It catalyses the reaction RNA(n) + a ribonucleoside 5'-triphosphate = RNA(n+1) + diphosphate. Its function is as follows. RNA-dependent RNA polymerase, which is responsible for the replication and transcription of the viral RNA genome using antigenomic RNA as an intermediate. During transcription, synthesizes subgenomic RNAs and assures their capping by a cap-snatching mechanism, which involves the endonuclease activity cleaving the host capped pre-mRNAs. These short capped RNAs are then used as primers for viral transcription. The 3'-end of subgenomic mRNAs molecules are not polyadenylated. During replication, the polymerase binds the 5' and 3' vRNA extremities at distinct sites. In turn, significant conformational changes occur in the polymerase and in vRNA to initiate active RNA synthesis. As a consequence of the use of the same enzyme for both transcription and replication, these mechanisms need to be well coordinated. This Aedes (Bovine) protein is RNA-directed RNA polymerase L.